We begin with the raw amino-acid sequence, 94 residues long: Cell division topological specificity factor (94 aa).

This sequence belongs to the MinE family.

Prevents the cell division inhibition by proteins MinC and MinD at internal division sites while permitting inhibition at polar sites. This ensures cell division at the proper site by restricting the formation of a division septum at the midpoint of the long axis of the cell. This chain is Cell division topological specificity factor, found in Synechococcus sp. (strain CC9311).